The chain runs to 339 residues: Methionine import ATP-binding protein MetN 2 (339 aa).

The ABC transporter domain occupies 2 to 241 (ISFNNVSKVY…PKTTTTQNFV (240 aa)). Residue 38–45 (GFSGAGKS) participates in ATP binding.

Belongs to the ABC transporter superfamily. Methionine importer (TC 3.A.1.24) family. In terms of assembly, the complex is composed of two ATP-binding proteins (MetN), two transmembrane proteins (MetI) and a solute-binding protein (MetQ).

The protein resides in the cell membrane. It catalyses the reaction L-methionine(out) + ATP + H2O = L-methionine(in) + ADP + phosphate + H(+). The catalysed reaction is D-methionine(out) + ATP + H2O = D-methionine(in) + ADP + phosphate + H(+). Its function is as follows. Part of the ABC transporter complex MetNIQ involved in methionine import. Responsible for energy coupling to the transport system. In Bacillus anthracis, this protein is Methionine import ATP-binding protein MetN 2.